Reading from the N-terminus, the 502-residue chain is 4,4'-diapophytoene desaturase (4,4'-diaponeurosporene-forming) (502 aa).

5–17 (VIGAGVTGLAAAA) lines the FAD pocket.

Belongs to the carotenoid/retinoid oxidoreductase family. CrtN subfamily.

It catalyses the reaction 15-cis-4,4'-diapophytoene + 3 FAD + 3 H(+) = all-trans-4,4'-diaponeurosporene + 3 FADH2. Its pathway is carotenoid biosynthesis; staphyloxanthin biosynthesis; staphyloxanthin from farnesyl diphosphate: step 2/5. In terms of biological role, involved in the biosynthesis of the yellow-orange carotenoid staphyloxanthin, which plays a role in the virulence via its protective function against oxidative stress. Catalyzes three successive dehydrogenation reactions that lead to the introduction of three double bonds into 4,4'-diapophytoene (dehydrosqualene), with 4,4'-diapophytofluene and 4,4'-diapo-zeta-carotene as intermediates, and 4,4'-diaponeurosporene (the major deep-yellow pigment in staphylococci strains) as the end product. The protein is 4,4'-diapophytoene desaturase (4,4'-diaponeurosporene-forming) of Staphylococcus aureus (strain bovine RF122 / ET3-1).